The primary structure comprises 148 residues: Deoxyuridine 5'-triphosphate nucleotidohydrolase (148 aa).

Residues 65-67 (RSG), asparagine 78, 82-84 (TID), and lysine 92 each bind substrate.

This sequence belongs to the dUTPase family. The cofactor is Mg(2+).

The enzyme catalyses dUTP + H2O = dUMP + diphosphate + H(+). It functions in the pathway pyrimidine metabolism; dUMP biosynthesis; dUMP from dCTP (dUTP route): step 2/2. Functionally, this enzyme is involved in nucleotide metabolism: it produces dUMP, the immediate precursor of thymidine nucleotides and it decreases the intracellular concentration of dUTP so that uracil cannot be incorporated into DNA. This Chlorobium luteolum (strain DSM 273 / BCRC 81028 / 2530) (Pelodictyon luteolum) protein is Deoxyuridine 5'-triphosphate nucleotidohydrolase.